The primary structure comprises 562 residues: Gut esterase 1 (562 aa).

The signal sequence occupies residues 1–16; the sequence is MRVLLASLLIFGACWA. C75 and C93 are disulfide-bonded. Residue S199 is the Acyl-ester intermediate of the active site. C251 and C259 are disulfide-bonded. Active-site charge relay system residues include E320 and H451. The Prevents secretion from ER signature appears at 559–562; it reads KDEL.

The protein belongs to the type-B carboxylesterase/lipase family. In terms of tissue distribution, expressed only in the intestine.

It is found in the endoplasmic reticulum lumen. The catalysed reaction is a carboxylic ester + H2O = an alcohol + a carboxylate + H(+). This chain is Gut esterase 1 (ges-1), found in Caenorhabditis briggsae.